Here is a 90-residue protein sequence, read N- to C-terminus: Molybdopterin synthase sulfur carrier subunit (90 aa).

Gly90 bears the 1-thioglycine; alternate mark. Gly90 is modified (glycyl adenylate; alternate).

This sequence belongs to the MoaD family. MOCS2A subfamily. As to quaternary structure, heterotetramer; composed of 2 small (Mocs2A) and 2 large (Mocs2B) subunits. In terms of processing, C-terminal thiocarboxylation occurs in 2 steps, it is first acyl-adenylated (-COAMP) via the hesA/moeB/thiF part of MOCS3, then thiocarboxylated (-COSH) via the rhodanese domain of MOCS3.

The protein resides in the cytoplasm. It participates in cofactor biosynthesis; molybdopterin biosynthesis. Its function is as follows. Acts as a sulfur carrier required for molybdopterin biosynthesis. Component of the molybdopterin synthase complex that catalyzes the conversion of precursor Z into molybdopterin by mediating the incorporation of 2 sulfur atoms into precursor Z to generate a dithiolene group. In the complex, serves as sulfur donor by being thiocarboxylated (-COSH) at its C-terminus by MOCS3. After interaction with Mocs2B, the sulfur is then transferred to precursor Z to form molybdopterin. This is Molybdopterin synthase sulfur carrier subunit from Drosophila ananassae (Fruit fly).